Consider the following 580-residue polypeptide: Cytochrome P450 monooxygenase helB1 (580 aa).

The tract at residues 1–32 (MRTYAIRPVSNRLPGPIEPKKHRRDRDNSTTG) is disordered. N-linked (GlcNAc...) asparagine glycosylation occurs at N28. The helical transmembrane segment at 61-81 (FLNTISVLQVLAAIFIGALTY) threads the bilayer. C497 contributes to the heme binding site.

It belongs to the cytochrome P450 family. The cofactor is heme.

It is found in the membrane. The protein operates within mycotoxin biosynthesis. In terms of biological role, cytochrome P450 monooxygenase; part of the gene cluster that mediates the biosynthesis of helvolic acid, an antibacterial nortriterpenoid. Protostadienol synthase helA cyclizes (3S)-oxidosqualene to (17Z)-protosta-17(20),24-dien-3-beta-ol (protostadienol). The synthesis of protostadienol is followed by several steps of monooxygenation, dehydrogenation, and acyl transfer to yield the final helvolic acid. Following the cyclization to the tetracyclic protostadienol by helA, cytochrome P450 monooxygenases helB1-mediated and helB2-mediated oxidation at C-4 and C-16, acyltransferase helD2-dependent acetylation of 16-OH, oxidation of C-21 by cytochrome P450 monooxygenase helB4, and short chain dehydrogenase helC-dependent oxidative decarboxylation yield the fusidane skeleton. This intermediate is further modified in three additional steps mediated by the cytochrome P450 monooxygenase helB3, the acyltransferase helD1, and the 3-ketosteroid 1-dehydrogenase helE to give helvolic acid. Compared with the late stages in the biosynthesis of helvolic acid, enzymes involved in the early stage modifications act in a relatively strict order. The hydroxylation of C-16 by helB1 and subsequent acetylation by helD2 should occur before the helB3-mediated oxidation of C-21. C-4 demethylation in fusidane-type antibiotics proceeds in an unusual manner though it is also achieved by oxidative decarboxylation. The methyl group at C-4 beta position is oxidized by helB1 and subsequently removed by the short chain dehydrogenase helC. The sequence is that of Cytochrome P450 monooxygenase helB1 from Aspergillus fumigatus (strain ATCC MYA-4609 / CBS 101355 / FGSC A1100 / Af293) (Neosartorya fumigata).